A 338-amino-acid chain; its full sequence is Methionyl-tRNA formyltransferase (338 aa).

Position 110 to 113 (S110 to P113) interacts with (6S)-5,6,7,8-tetrahydrofolate.

The protein belongs to the Fmt family.

The enzyme catalyses L-methionyl-tRNA(fMet) + (6R)-10-formyltetrahydrofolate = N-formyl-L-methionyl-tRNA(fMet) + (6S)-5,6,7,8-tetrahydrofolate + H(+). Functionally, attaches a formyl group to the free amino group of methionyl-tRNA(fMet). The formyl group appears to play a dual role in the initiator identity of N-formylmethionyl-tRNA by promoting its recognition by IF2 and preventing the misappropriation of this tRNA by the elongation apparatus. The polypeptide is Methionyl-tRNA formyltransferase (Synechococcus sp. (strain CC9605)).